The primary structure comprises 319 residues: Ninja-family protein Os07g0602900 (319 aa).

3 disordered regions span residues 1–26 (MAAS…EKGG), 69–152 (LPGG…DAMY), and 181–234 (AEAM…LTMR). Positions 70–79 (PGGGGGGAGG) are enriched in gly residues. Residues 105-118 (ERWRRREMQSLKRL) show a composition bias toward basic and acidic residues. A compositionally biased stretch (polar residues) spans 185–196 (DTSSSDNASCQN). Over residues 225–234 (LRTLRSLTMR) the composition is skewed to low complexity.

Belongs to the Ninja family.

The protein resides in the nucleus. The sequence is that of Ninja-family protein Os07g0602900 from Oryza sativa subsp. japonica (Rice).